Reading from the N-terminus, the 289-residue chain is Ribosomal RNA small subunit methyltransferase H (289 aa).

S-adenosyl-L-methionine is bound by residues 40 to 42, D60, F84, D106, and Q113; that span reads GGH.

The protein belongs to the methyltransferase superfamily. RsmH family.

The protein localises to the cytoplasm. It catalyses the reaction cytidine(1402) in 16S rRNA + S-adenosyl-L-methionine = N(4)-methylcytidine(1402) in 16S rRNA + S-adenosyl-L-homocysteine + H(+). Functionally, specifically methylates the N4 position of cytidine in position 1402 (C1402) of 16S rRNA. This Haemophilus influenzae (strain PittGG) protein is Ribosomal RNA small subunit methyltransferase H.